Consider the following 301-residue polypeptide: uncharacterized protein (301 aa).

Disordered regions lie at residues 56–126 and 149–173; these read ESPT…ESDL and LSTE…DASS. Residues 71 to 82 show a composition bias toward basic and acidic residues; it reads VQKENQKPKDLN. A compositionally biased stretch (polar residues) spans 93–102; it reads KNSSGLVSQI. Over residues 161 to 173 the composition is skewed to low complexity; the sequence is SNTSSSSMSDASS.

This is an uncharacterized protein from Caenorhabditis elegans.